We begin with the raw amino-acid sequence, 668 residues long: Fructose-1,6-bisphosphatase class 3 (668 aa).

Belongs to the FBPase class 3 family. Requires Mn(2+) as cofactor.

It carries out the reaction beta-D-fructose 1,6-bisphosphate + H2O = beta-D-fructose 6-phosphate + phosphate. Its pathway is carbohydrate biosynthesis; gluconeogenesis. This Clostridium botulinum (strain Loch Maree / Type A3) protein is Fructose-1,6-bisphosphatase class 3.